A 265-amino-acid polypeptide reads, in one-letter code: 2-C-methyl-D-erythritol 4-phosphate cytidylyltransferase (265 aa).

Residues 231 to 241 (DRGGASREAER) are compositionally biased toward basic and acidic residues. Residues 231–265 (DRGGASREAERSAMPSAATSVFSGARSAASGSEEV) form a disordered region. Over residues 253–265 (SGARSAASGSEEV) the composition is skewed to low complexity.

It belongs to the IspD/TarI cytidylyltransferase family. IspD subfamily.

The catalysed reaction is 2-C-methyl-D-erythritol 4-phosphate + CTP + H(+) = 4-CDP-2-C-methyl-D-erythritol + diphosphate. Its pathway is isoprenoid biosynthesis; isopentenyl diphosphate biosynthesis via DXP pathway; isopentenyl diphosphate from 1-deoxy-D-xylulose 5-phosphate: step 2/6. Its function is as follows. Catalyzes the formation of 4-diphosphocytidyl-2-C-methyl-D-erythritol from CTP and 2-C-methyl-D-erythritol 4-phosphate (MEP). This chain is 2-C-methyl-D-erythritol 4-phosphate cytidylyltransferase, found in Xanthomonas campestris pv. campestris (strain B100).